A 570-amino-acid chain; its full sequence is Vacuolar protein sorting-associated protein 45 (570 aa).

2 positions are modified to phosphoserine: S307 and S441.

It belongs to the STXBP/unc-18/SEC1 family. Interacts with STX6 and ZFYVE20. Ubiquitous; expression was highest in testis and in brain. Detected in every part of the brain.

The protein resides in the golgi apparatus membrane. It localises to the endosome membrane. In terms of biological role, may play a role in vesicle-mediated protein trafficking from the Golgi stack through the trans-Golgi network. The sequence is that of Vacuolar protein sorting-associated protein 45 (Vps45) from Rattus norvegicus (Rat).